We begin with the raw amino-acid sequence, 314 residues long: MGEGVNMEIYNESILWDEYFDALEKRNYEKALLLIDKILEVRESPDVYVRKARILRTLGENDKALEYFDKALKLKPKYILANFLKGALLVSLGKLEEAKEVFLKLCRLEKSDLPVKYVTAFILKKLGEYDYALKIIDKILKKYPKSAIAWAEKGEILYREGKLKKSLECFDNALKINPKDCQSLLYKGEILFKLGRYGEALKCLKKVFERNNKDIRALMYIIQILIYLGRLNQALEYTKKALKLNPDDPLLYLYKGIILNKLGKYNEAIKYFDKVLEINPNIPDAWNGKAIALEKLGKINEAIECYNRALDIYE.

TPR repeat units follow at residues 12–45 (ESILWDEYFDALEKRNYEKALLLIDKILEVRESP), 46–78 (DVYVRKARILRTLGENDKALEYFDKALKLKPKY), 80–112 (LANFLKGALLVSLGKLEEAKEVFLKLCRLEKSD), 114–146 (PVKYVTAFILKKLGEYDYALKIIDKILKKYPKS), 147–180 (AIAWAEKGEILYREGKLKKSLECFDNALKINPKD), 182–214 (QSLLYKGEILFKLGRYGEALKCLKKVFERNNKD), 215–248 (IRALMYIIQILIYLGRLNQALEYTKKALKLNPDD), 249–282 (PLLYLYKGIILNKLGKYNEAIKYFDKVLEINPNI), and 284–313 (DAWNGKAIALEKLGKINEAIECYNRALDIY).

The polypeptide is TPR repeat-containing protein MJ1345 (Methanocaldococcus jannaschii (strain ATCC 43067 / DSM 2661 / JAL-1 / JCM 10045 / NBRC 100440) (Methanococcus jannaschii)).